Consider the following 363-residue polypeptide: 3-isopropylmalate dehydrogenase (363 aa).

NAD(+) is bound at residue 79 to 92 (GPKWEHLPPNDQPE). The substrate site is built by R100, R110, R139, and D228. Mg(2+)-binding residues include D228, D252, and D256. 286–298 (GSAPDIAGKNIAN) contacts NAD(+).

It belongs to the isocitrate and isopropylmalate dehydrogenases family. LeuB type 1 subfamily. Homodimer. Mg(2+) is required as a cofactor. Mn(2+) serves as cofactor.

The protein localises to the cytoplasm. The catalysed reaction is (2R,3S)-3-isopropylmalate + NAD(+) = 4-methyl-2-oxopentanoate + CO2 + NADH. It participates in amino-acid biosynthesis; L-leucine biosynthesis; L-leucine from 3-methyl-2-oxobutanoate: step 3/4. Catalyzes the oxidation of 3-carboxy-2-hydroxy-4-methylpentanoate (3-isopropylmalate) to 3-carboxy-4-methyl-2-oxopentanoate. The product decarboxylates to 4-methyl-2 oxopentanoate. In Aliivibrio fischeri (strain ATCC 700601 / ES114) (Vibrio fischeri), this protein is 3-isopropylmalate dehydrogenase.